The chain runs to 424 residues: Probable serine/threonine-protein kinase PBL12 (424 aa).

One can recognise a Protein kinase domain in the interval phenylalanine 88–isoleucine 368. ATP-binding positions include leucine 94–valine 102 and lysine 123. The active-site Proton acceptor is the aspartate 218.

Belongs to the protein kinase superfamily. Ser/Thr protein kinase family. As to expression, expressed specifically in roots.

The protein localises to the cell membrane. It carries out the reaction L-seryl-[protein] + ATP = O-phospho-L-seryl-[protein] + ADP + H(+). It catalyses the reaction L-threonyl-[protein] + ATP = O-phospho-L-threonyl-[protein] + ADP + H(+). May play a role in the signal transduction pathway of osmotic stress. May be involved in plant defense signaling. This is Probable serine/threonine-protein kinase PBL12 from Arabidopsis thaliana (Mouse-ear cress).